Consider the following 303-residue polypeptide: Tyrosine recombinase XerC (303 aa).

Positions 6-92 (ASLAPQVEAF…ALRSFLNWLV (87 aa)) constitute a Core-binding (CB) domain. The Tyr recombinase domain maps to 113–292 (HLPKNIDVDE…DFQHLATVYD (180 aa)). Catalysis depends on residues Arg-152, Lys-176, His-244, Arg-247, and His-270. Tyr-279 acts as the O-(3'-phospho-DNA)-tyrosine intermediate in catalysis.

Belongs to the 'phage' integrase family. XerC subfamily. In terms of assembly, forms a cyclic heterotetrameric complex composed of two molecules of XerC and two molecules of XerD, in which XerC interacts with XerD via its C-terminal region, XerD interacts with XerC via its C-terminal region and so on.

The protein localises to the cytoplasm. With respect to regulation, ftsK may regulate the catalytic switch between XerC and XerD in the heterotetrameric complex during the two steps of the recombination process. Its function is as follows. Site-specific tyrosine recombinase, which acts by catalyzing the cutting and rejoining of the recombining DNA molecules. Binds cooperatively to specific DNA consensus sequences that are separated from XerD binding sites by a short central region, forming the heterotetrameric XerC-XerD complex that recombines DNA substrates. The complex is essential to convert dimers of the bacterial chromosome into monomers to permit their segregation at cell division. It also contributes to the segregational stability of plasmids. In the complex XerC specifically exchanges the top DNA strands. The protein is Tyrosine recombinase XerC of Yersinia pestis.